The following is a 612-amino-acid chain: Heparan-sulfate 6-O-sulfotransferase 2 (612 aa).

Over 1–4 the chain is Cytoplasmic; the sequence is MALP. A helical; Signal-anchor for type II membrane protein transmembrane segment spans residues 5–27; that stretch reads AFAARALGPPLQPEQGAPARTTC. The interval 9-52 is disordered; sequence RALGPPLQPEQGAPARTTCPRRHSRVEAELAASRPGSVAASVRA. At 28–612 the chain is on the lumenal side; that stretch reads PRRHSRVEAE…DYIGSVETWR (585 aa). Residue Asn209 is glycosylated (N-linked (GlcNAc...) asparagine). Position 233–241 (233–241) interacts with 3'-phosphoadenylyl sulfate; it reads HIQKTGGTT. Substrate is bound by residues 263 to 264, Arg280, Trp285, and His290; that span reads KK. His290 functions as the Proton acceptor in the catalytic mechanism. Arg325 and Ser333 together coordinate 3'-phosphoadenylyl sulfate. Residues His337 and Trp344 each contribute to the substrate site. Asn404 is a glycosylation site (N-linked (GlcNAc...) asparagine). Residue 457-459 participates in 3'-phosphoadenylyl sulfate binding; sequence TQY. N-linked (GlcNAc...) asparagine glycosylation occurs at Asn460. 463 to 464 contacts 3'-phosphoadenylyl sulfate; that stretch reads RA. The segment at 529–612 is disordered; that stretch reads HFQSQSQGQS…DYIGSVETWR (84 aa). A compositionally biased stretch (low complexity) spans 531–564; the sequence is QSQSQGQSQSQSPGQNLSQNPNPNPNQNLTQNLS. N-linked (GlcNAc...) asparagine glycans are attached at residues Asn546, Asn558, Asn562, Asn574, and Asn599. Residues 565–577 show a composition bias toward polar residues; the sequence is HNLTPSSNPNSTQ.

The protein belongs to the sulfotransferase 6 family.

The protein localises to the membrane. The enzyme catalyses alpha-D-glucosaminyl-[heparan sulfate](n) + 3'-phosphoadenylyl sulfate = 6-sulfo-alpha-D-glucosaminyl-[heparan sulfate](n) + adenosine 3',5'-bisphosphate + H(+). In terms of biological role, 6-O-sulfation enzyme which catalyzes the transfer of sulfate from 3'-phosphoadenosine 5'-phosphosulfate (PAPS) to position 6 of the N-sulfoglucosamine residue (GlcNS) of heparan sulfate. The polypeptide is Heparan-sulfate 6-O-sulfotransferase 2 (Hs6st2) (Mus musculus (Mouse)).